The following is a 248-amino-acid chain: tRNA (guanine-N(1)-)-methyltransferase (248 aa).

S-adenosyl-L-methionine-binding positions include Gly-113 and 133–138; that span reads IGDYVL.

It belongs to the RNA methyltransferase TrmD family. As to quaternary structure, homodimer.

The protein resides in the cytoplasm. The catalysed reaction is guanosine(37) in tRNA + S-adenosyl-L-methionine = N(1)-methylguanosine(37) in tRNA + S-adenosyl-L-homocysteine + H(+). In terms of biological role, specifically methylates guanosine-37 in various tRNAs. This Shewanella baltica (strain OS223) protein is tRNA (guanine-N(1)-)-methyltransferase.